The following is a 357-amino-acid chain: Glutamine synthetase root isozyme 5 (357 aa).

A GS beta-grasp domain is found at 19–99 (IIAEYIWVGG…VMCDCYTPQG (81 aa)). The region spanning 106–357 (KRYKAATVFS…ADTTILWKGN (252 aa)) is the GS catalytic domain.

This sequence belongs to the glutamine synthetase family. Homooctamer. Found mainly in the cortical tissues of seedling roots, stem and seedling shoot.

Its subcellular location is the cytoplasm. The catalysed reaction is L-glutamate + NH4(+) + ATP = L-glutamine + ADP + phosphate + H(+). Functionally, plays a role in the flow of nitrogen into nitrogenous organic compounds. The chain is Glutamine synthetase root isozyme 5 (GS1-5) from Zea mays (Maize).